Consider the following 298-residue polypeptide: Baseplate tube protein p140 (298 aa).

Homotrimer. Forms a pseudo-hexameric ring. Interacts with collar protein p132, DTP-pb9 and tail tube protein pb6.

The protein resides in the virion. Forms the simplified baseplate, together with the p132 collar protein ring and the cone (DTP-pb9 and BHP-pb3). In Escherichia phage T5 (Enterobacteria phage T5), this protein is Baseplate tube protein p140.